Consider the following 117-residue polypeptide: Large ribosomal subunit protein bL19 (117 aa).

This sequence belongs to the bacterial ribosomal protein bL19 family.

Functionally, this protein is located at the 30S-50S ribosomal subunit interface and may play a role in the structure and function of the aminoacyl-tRNA binding site. The polypeptide is Large ribosomal subunit protein bL19 (Shewanella amazonensis (strain ATCC BAA-1098 / SB2B)).